Consider the following 499-residue polypeptide: Probable cytosol aminopeptidase (499 aa).

2 residues coordinate Mn(2+): Lys-263 and Asp-268. Lys-275 is a catalytic residue. Asp-286, Asp-345, and Glu-347 together coordinate Mn(2+). Arg-349 is a catalytic residue.

It belongs to the peptidase M17 family. It depends on Mn(2+) as a cofactor.

It is found in the cytoplasm. The enzyme catalyses Release of an N-terminal amino acid, Xaa-|-Yaa-, in which Xaa is preferably Leu, but may be other amino acids including Pro although not Arg or Lys, and Yaa may be Pro. Amino acid amides and methyl esters are also readily hydrolyzed, but rates on arylamides are exceedingly low.. The catalysed reaction is Release of an N-terminal amino acid, preferentially leucine, but not glutamic or aspartic acids.. Presumably involved in the processing and regular turnover of intracellular proteins. Catalyzes the removal of unsubstituted N-terminal amino acids from various peptides. This Bradyrhizobium sp. (strain BTAi1 / ATCC BAA-1182) protein is Probable cytosol aminopeptidase.